Here is a 575-residue protein sequence, read N- to C-terminus: Acyloxyacyl hydrolase (575 aa).

The N-terminal stretch at 1-23 (MQSPWKILTVAPLFLLLSLQSSA) is a signal peptide. Positions 24-34 (SPANDDQSRPS) are excised as a propeptide. The Saposin B-type domain occupies 37–118 (NGHTCVGCVL…HTLEFCKQNT (82 aa)). Positions 38 to 70 (GHTCVGCVLVVSVIEQLAQVHNSTVQASMERLC) are important for enzyme activity, localization to cytoplasmic vesicles, and protein stability. Cystine bridges form between C41-C114, C44-C108, C70-C83, C123-C453, C160-C169, C206-C230, C249-C329, and C376-C459. N59 is a glycosylation site (N-linked (GlcNAc...) asparagine). The interval 173-177 (KLAME) is lipopolysaccharide binding. The Ca(2+) site is built by D184, D186, D188, Y190, D205, N207, D208, D210, V213, D223, D227, N229, N231, I233, and E245. N207 carries N-linked (GlcNAc...) asparagine glycosylation. S263 is a catalytic residue. N409 and N466 each carry an N-linked (GlcNAc...) asparagine glycan.

In terms of assembly, heterodimer of the large and small subunits; disulfide-linked. Ca(2+) serves as cofactor. Cleaved into a large and a small subunit. Post-translationally, the small subunit is N-glycosylated.

Its subcellular location is the secreted. The protein resides in the cytoplasmic vesicle. It carries out the reaction a 3-(acyloxy)acyl derivative of bacterial toxin + H2O = a 3-hydroxyacyl derivative of bacterial toxin + a fatty acid + H(+). Its activity is regulated as follows. Inhibited by EDTA. Its function is as follows. Removes the secondary (acyloxyacyl-linked) fatty acyl chains from the lipid A region of bacterial lipopolysaccharides. By breaking down LPS, terminates the host response to bacterial infection and prevents prolonged and damaging inflammatory responses. In peritoneal macrophages, seems to be important for recovery from a state of immune tolerance following infection by Gram-negative bacteria. This chain is Acyloxyacyl hydrolase, found in Homo sapiens (Human).